The following is a 142-amino-acid chain: Small heat shock protein IbpB (142 aa).

Residues 26–137 (AGEGQSFPPY…AAQRIAISER (112 aa)) enclose the sHSP domain.

It belongs to the small heat shock protein (HSP20) family. As to quaternary structure, homodimer. Forms homomultimers of about 100-150 subunits at optimal growth temperatures. Conformation changes to oligomers at high temperatures or high ionic concentrations. The decrease in size of the multimers is accompanied by an increase in chaperone activity.

Its subcellular location is the cytoplasm. In terms of biological role, associates with aggregated proteins, together with IbpA, to stabilize and protect them from irreversible denaturation and extensive proteolysis during heat shock and oxidative stress. Aggregated proteins bound to the IbpAB complex are more efficiently refolded and reactivated by the ATP-dependent chaperone systems ClpB and DnaK/DnaJ/GrpE. Its activity is ATP-independent. This Shigella boydii serotype 18 (strain CDC 3083-94 / BS512) protein is Small heat shock protein IbpB.